Here is a 540-residue protein sequence, read N- to C-terminus: Phosphoenolpyruvate carboxykinase (ATP) (540 aa).

A substrate-binding site is contributed by Arg-65. Lys-87 is subject to N6-acetyllysine. 2 residues coordinate substrate: Tyr-207 and Lys-213. ATP is bound by residues Lys-213, His-232, and 248-256 (GLSGTGKTT). Mn(2+)-binding residues include Lys-213 and His-232. Asp-269 contacts Mn(2+). Residues Glu-297, Arg-333, 449–450 (RI), and Thr-455 contribute to the ATP site. Arg-333 is a substrate binding site. Lys-523 is modified (N6-acetyllysine).

This sequence belongs to the phosphoenolpyruvate carboxykinase (ATP) family. Monomer. Mn(2+) is required as a cofactor.

It localises to the cytoplasm. The catalysed reaction is oxaloacetate + ATP = phosphoenolpyruvate + ADP + CO2. It functions in the pathway carbohydrate biosynthesis; gluconeogenesis. Involved in the gluconeogenesis. Catalyzes the conversion of oxaloacetate (OAA) to phosphoenolpyruvate (PEP) through direct phosphoryl transfer between the nucleoside triphosphate and OAA. The chain is Phosphoenolpyruvate carboxykinase (ATP) from Escherichia coli O127:H6 (strain E2348/69 / EPEC).